A 303-amino-acid polypeptide reads, in one-letter code: Putative band 7 family protein R614 (303 aa).

Belongs to the band 7/mec-2 family.

This chain is Putative band 7 family protein R614, found in Acanthamoeba polyphaga (Amoeba).